A 199-amino-acid polypeptide reads, in one-letter code: dITP/XTP pyrophosphatase (199 aa).

Thr-8–Lys-13 serves as a coordination point for substrate. Residue Asp-68 is the Proton acceptor of the active site. Position 68 (Asp-68) interacts with Mg(2+). Substrate is bound by residues Ser-69, His-151–Asp-154, Lys-174, and His-179–Arg-180.

Belongs to the HAM1 NTPase family. As to quaternary structure, homodimer. Mg(2+) serves as cofactor.

The catalysed reaction is XTP + H2O = XMP + diphosphate + H(+). The enzyme catalyses dITP + H2O = dIMP + diphosphate + H(+). It catalyses the reaction ITP + H2O = IMP + diphosphate + H(+). In terms of biological role, pyrophosphatase that catalyzes the hydrolysis of nucleoside triphosphates to their monophosphate derivatives, with a high preference for the non-canonical purine nucleotides XTP (xanthosine triphosphate), dITP (deoxyinosine triphosphate) and ITP. Seems to function as a house-cleaning enzyme that removes non-canonical purine nucleotides from the nucleotide pool, thus preventing their incorporation into DNA/RNA and avoiding chromosomal lesions. This Leifsonia xyli subsp. xyli (strain CTCB07) protein is dITP/XTP pyrophosphatase.